The primary structure comprises 416 residues: Cell division protein FtsZ (416 aa).

Residues 20–24 (GGGVN), 107–109 (GTG), Glu138, Arg142, and Asp186 each bind GTP. The segment covering 319-335 (QETNANNSSPAQRQAES) has biased composition (polar residues). The tract at residues 319-416 (QETNANNSSP…DSLDFPDFLK (98 aa)) is disordered. Positions 376 to 392 (QDDDIPDDAGFDVDLPA) are enriched in acidic residues. Residues 404-416 (ARKDSLDFPDFLK) are compositionally biased toward basic and acidic residues.

It belongs to the FtsZ family. As to quaternary structure, homodimer. Polymerizes to form a dynamic ring structure in a strictly GTP-dependent manner. Interacts directly with several other division proteins.

The protein localises to the cytoplasm. Its function is as follows. Essential cell division protein that forms a contractile ring structure (Z ring) at the future cell division site. The regulation of the ring assembly controls the timing and the location of cell division. One of the functions of the FtsZ ring is to recruit other cell division proteins to the septum to produce a new cell wall between the dividing cells. Binds GTP and shows GTPase activity. The protein is Cell division protein FtsZ of Kocuria rhizophila (strain ATCC 9341 / DSM 348 / NBRC 103217 / DC2201).